Here is a 61-residue protein sequence, read N- to C-terminus: Large ribosomal subunit protein uL30 (61 aa).

Belongs to the universal ribosomal protein uL30 family. As to quaternary structure, part of the 50S ribosomal subunit.

This Thermosipho melanesiensis (strain DSM 12029 / CIP 104789 / BI429) protein is Large ribosomal subunit protein uL30.